The primary structure comprises 271 residues: DNA-directed RNA polymerase subunit Rpo3 (271 aa).

This sequence belongs to the archaeal Rpo3/eukaryotic RPB3 RNA polymerase subunit family. Part of the RNA polymerase complex.

The protein localises to the cytoplasm. The enzyme catalyses RNA(n) + a ribonucleoside 5'-triphosphate = RNA(n+1) + diphosphate. In terms of biological role, DNA-dependent RNA polymerase (RNAP) catalyzes the transcription of DNA into RNA using the four ribonucleoside triphosphates as substrates. This is DNA-directed RNA polymerase subunit Rpo3 from Thermoplasma volcanium (strain ATCC 51530 / DSM 4299 / JCM 9571 / NBRC 15438 / GSS1).